A 57-amino-acid chain; its full sequence is Potassium channel toxin alpha-KTx 26.1 (57 aa).

The signal sequence occupies residues 1 to 22 (MSRLFVFILIALFLSAIIDVMS). Disulfide bonds link Cys30-Cys48, Cys34-Cys53, and Cys38-Cys55.

The protein belongs to the short scorpion toxin superfamily. Potassium channel inhibitor family. Alpha-KTx 26 subfamily. In terms of tissue distribution, expressed by the venom gland.

Its subcellular location is the secreted. Functionally, recombinant toxin that reversibly inhibits the potassium current of mKv1.3/KCNA3 channel stably expressed in COS7 cells (IC(50)=150 nM). Also shows a weak inhibition on Kv1.2/KCNA2, Kv1.3/KCNA3 and TRPV1 channels. In Olivierus martensii (Manchurian scorpion), this protein is Potassium channel toxin alpha-KTx 26.1.